The following is a 516-amino-acid chain: Maturase K (516 aa).

This sequence belongs to the intron maturase 2 family. MatK subfamily.

It is found in the plastid. Its subcellular location is the chloroplast. In terms of biological role, usually encoded in the trnK tRNA gene intron. Probably assists in splicing its own and other chloroplast group II introns. The polypeptide is Maturase K (Cypripedium calceolus (Yellow lady's slipper)).